The primary structure comprises 164 residues: Dehydrin Rab16C (164 aa).

Positions 42–51 (MGGHHAGAGG) are enriched in gly residues. A disordered region spans residues 42-164 (MGGHHAGAGG…KIKEKLPGQH (123 aa)). The segment covering 105–115 (GNNQQQQQMMG) has biased composition (low complexity). The segment covering 128–138 (GMTGAGTGTGV) has biased composition (gly residues). The span at 147-164 (GEKKGFMDKIKEKLPGQH) shows a compositional bias: basic and acidic residues.

It belongs to the plant dehydrin family.

The protein is Dehydrin Rab16C (RAB16C) of Oryza sativa subsp. japonica (Rice).